We begin with the raw amino-acid sequence, 548 residues long: Membrane protein insertase YidC (548 aa).

The chain crosses the membrane as a helical span at residues 6-26 (NLLVIALLFVSFMIWQAWEQD). Positions 28–55 (NPQPQAQQTTQTTTTAAGSAADQGVPAS) are disordered. The segment covering 30 to 50 (QPQAQQTTQTTTTAAGSAADQ) has biased composition (low complexity). The next 4 helical transmembrane spans lie at 350-370 (FVGNWGFSIIIITFIVRGIMY), 420-440 (LGGCFPLLIQMPIFLALYYML), 458-478 (LSAQDPYYILPILMGVTMFFI), and 499-519 (PVIFTVFFLWFPSGLVLYYIV).

This sequence belongs to the OXA1/ALB3/YidC family. Type 1 subfamily. Interacts with the Sec translocase complex via SecD. Specifically interacts with transmembrane segments of nascent integral membrane proteins during membrane integration.

It is found in the cell inner membrane. Required for the insertion and/or proper folding and/or complex formation of integral membrane proteins into the membrane. Involved in integration of membrane proteins that insert both dependently and independently of the Sec translocase complex, as well as at least some lipoproteins. Aids folding of multispanning membrane proteins. In Shigella dysenteriae serotype 1 (strain Sd197), this protein is Membrane protein insertase YidC.